The chain runs to 461 residues: MLKIFNTLTRQKEEFKPIHAGEVGMYVCGITVYDLCHIGHGRTFVAFDVVARYLRFLGYKLKYVRNITDIDDKIIKRANENGESFVALVDRMIAEMHKDFDALNILRPDMEPRATHHIAEIIELTEQLIAKGHAYVADNGDVMFDVPTDPTYGVLSRQDLDQLQAGARVDVVDDKRNPMDFVLWKMSKEGEPSWPSPWGAGRPGWHIECSAMNCKQLGNHFDIHGGGSDLMFPHHENEIAQSTCAHDGQYVNYWMHSGMVMVDREKMSKSLGNFFTVRDVLKYYDAETVRYFLMSGHYRSQLNYSEENLKQARAALERLYTALRGTDKTVAPAGGEAFEARFIEAMDDDFNTPEAYSVLFDMAREVNRLKAEDMAAANAMASHLRKLSAVLGLLEQEPEAFLQSGAQADDSEVAEIEALIQQRLDARKAKDWAAADAARDRLNEMGIVLEDGPQGTTWRRK.

Cysteine 28 contacts Zn(2+). The 'HIGH' region signature appears at 30–40 (ITVYDLCHIGH). Positions 209, 234, and 238 each coordinate Zn(2+). Positions 266–270 (KMSKS) match the 'KMSKS' region motif. An ATP-binding site is contributed by lysine 269.

The protein belongs to the class-I aminoacyl-tRNA synthetase family. As to quaternary structure, monomer. The cofactor is Zn(2+).

The protein localises to the cytoplasm. The enzyme catalyses tRNA(Cys) + L-cysteine + ATP = L-cysteinyl-tRNA(Cys) + AMP + diphosphate. The protein is Cysteine--tRNA ligase of Escherichia coli (strain 55989 / EAEC).